The sequence spans 478 residues: ATP synthase subunit beta (478 aa).

152-159 (GGAGVGKT) provides a ligand contact to ATP.

This sequence belongs to the ATPase alpha/beta chains family. In terms of assembly, F-type ATPases have 2 components, CF(1) - the catalytic core - and CF(0) - the membrane proton channel. CF(1) has five subunits: alpha(3), beta(3), gamma(1), delta(1), epsilon(1). CF(0) has three main subunits: a(1), b(2) and c(9-12). The alpha and beta chains form an alternating ring which encloses part of the gamma chain. CF(1) is attached to CF(0) by a central stalk formed by the gamma and epsilon chains, while a peripheral stalk is formed by the delta and b chains.

It localises to the cell membrane. It carries out the reaction ATP + H2O + 4 H(+)(in) = ADP + phosphate + 5 H(+)(out). Produces ATP from ADP in the presence of a proton gradient across the membrane. The catalytic sites are hosted primarily by the beta subunits. In Wolbachia pipientis subsp. Culex pipiens (strain wPip), this protein is ATP synthase subunit beta.